Consider the following 190-residue polypeptide: MEQLKDKIRSHGIVLSDRVLKVDAFLNHQIDPVLMQAIGREFARRFRDDGITKIVTIEASGIAPAVMAGLELGVPVIFARKHQSLTLHDNLLTATVYSFTKQVESTIAVSTQHLSANDRVLIIDDFLANGKAAKGLISIINQAGASIAGLGIVIEKSFQTGRKELEEAGYRVESLARVASLADGAVQFID.

The xanthine site is built by L20 and N27. Position 128–132 (128–132 (ANGKA)) interacts with 5-phospho-alpha-D-ribose 1-diphosphate. K156 provides a ligand contact to xanthine.

Belongs to the purine/pyrimidine phosphoribosyltransferase family. Xpt subfamily. In terms of assembly, homodimer.

Its subcellular location is the cytoplasm. The enzyme catalyses XMP + diphosphate = xanthine + 5-phospho-alpha-D-ribose 1-diphosphate. Its pathway is purine metabolism; XMP biosynthesis via salvage pathway; XMP from xanthine: step 1/1. Its function is as follows. Converts the preformed base xanthine, a product of nucleic acid breakdown, to xanthosine 5'-monophosphate (XMP), so it can be reused for RNA or DNA synthesis. This Stutzerimonas stutzeri (strain A1501) (Pseudomonas stutzeri) protein is Xanthine phosphoribosyltransferase.